A 337-amino-acid polypeptide reads, in one-letter code: MSYSGAGLGKPGSGKRRIRDLLTQSDNRVCADCGAPDPKWASANIGVFICLKCCGVHRSLGSHISKVLSVTLDEWSDEEVDSMIEIGGNASANSIYEAFIPEGSSKPGPDASHDQRMRFIRSKYEHQEFLKPSLRITSVRGSSTKTPAFLSSSLSKKIVDSFRTNSSSQQPQLEGMVEFIGLLKVTIKKGTNMAIRDMMSSDPYVVLTLGQQKAQSTVVKSNLNPVWNEELMLSVPHNYGSVKLQVFDYDTFSADDIMGEAEIDIQPLITSAMAFGDPEMFGDMQIGKWLKSHDNALIEDSIINIADGKVKQEVQIKLQNVESGELELEMEWLPLEQ.

The 123-residue stretch at 15-137 (KRRIRDLLTQ…EFLKPSLRIT (123 aa)) folds into the Arf-GAP domain. The C4-type zinc finger occupies 30–53 (CADCGAPDPKWASANIGVFICLKC). In terms of domain architecture, C2 spans 164–281 (TNSSSQQPQL…AMAFGDPEMF (118 aa)). Ca(2+) is bound by residues D250, S253, and D256.

Ca(2+) serves as cofactor. In terms of tissue distribution, expressed in roots, leaves, flowers and siliques. Low levels of expression in seeds and stems.

The protein localises to the golgi apparatus. Its subcellular location is the cell membrane. GTPase-activating protein (GAP) for ADP ribosylation factor (ARF). Binds phosphatidylinositol 3-monophosohate (PI-3-P) and anionic phospholipids. The chain is ADP-ribosylation factor GTPase-activating protein AGD12 (AGD12) from Arabidopsis thaliana (Mouse-ear cress).